A 1288-amino-acid chain; its full sequence is (E3-independent) E2 ubiquitin-conjugating enzyme UBE2O (1288 aa).

2 stretches are compositionally biased toward low complexity: residues 1-26 (MADP…APAA) and 34-47 (ATDS…DSGP). Disordered regions lie at residues 1-51 (MADP…EAGS) and 80-109 (EDSD…EGRA). A phosphoserine mark is found at serine 45, serine 82, serine 84, and serine 394. Disordered regions lie at residues 396 to 529 (TPDT…KNKV) and 711 to 743 (ESDY…NGLV). Residues 401–418 (CPRDHSMEDPDKKGEARA) show a composition bias toward basic and acidic residues. Serine 436 bears the Phosphoserine mark. A compositionally biased stretch (acidic residues) spans 440–450 (MQDEGSEELQE). Residues 462–472 (EGGDDGLHSAE) show a composition bias toward basic and acidic residues. Residues 473 to 485 (QDADDEAADDTDD) show a composition bias toward acidic residues. 2 positions are modified to phosphothreonine: threonine 483 and threonine 486. Positions 486-502 (TSSVTSSASSTTSSQSG) are enriched in low complexity. Serine 510 is subject to Phosphoserine. Residues 517–528 (NLKRKHKRKKNK) show a composition bias toward basic residues. The segment covering 717-726 (VEGSSSGASS) has biased composition (low complexity). Positions 727 to 737 (DEWEDDSDSWE) are enriched in acidic residues. Positions 809–879 (RELKEAIKIL…IAEEEKMEAV (71 aa)) form a coiled coil. Residue serine 833 is modified to Phosphoserine. Threonine 835 bears the Phosphothreonine mark. The residue at position 836 (serine 836) is a Phosphoserine. Positions 872 to 890 (EEEKMEAVPDTERKEEKPE) are enriched in basic and acidic residues. Positions 872 to 899 (EEEKMEAVPDTERKEEKPEVQSPVKAEW) are disordered. At serine 893 the chain carries Phosphoserine. In terms of domain architecture, UBC core spans 950–1110 (KFFSTVRKEM…ALIRVVQSMT (161 aa)). Cysteine 1037 acts as the Glycyl thioester intermediate in catalysis. The tract at residues 1158–1247 (GALKDSSSLE…RSFLPEKSGY (90 aa)) is disordered.

It belongs to the ubiquitin-conjugating enzyme family. Interacts with CPNE1 (via VWFA domain) and CPNE4 (via VWFA domain). Interacts with UBR2. In terms of processing, phosphorylated. Phosphorylation affects subcellular location. Ubiquitinated: autoubiquitinates, possibly affecting its subcellular location. Highly expressed in reticulocytes.

The protein localises to the cytoplasm. The protein resides in the nucleus. The enzyme catalyses S-ubiquitinyl-[E1 ubiquitin-activating enzyme]-L-cysteine + [acceptor protein]-L-lysine = [E1 ubiquitin-activating enzyme]-L-cysteine + N(6)-monoubiquitinyl-[acceptor protein]-L-lysine.. It participates in protein modification; protein ubiquitination. With respect to regulation, inhibited by inorganic arsenite such as phenylarsenoxides. Its function is as follows. E2/E3 hybrid ubiquitin-protein ligase that displays both E2 and E3 ligase activities and mediates monoubiquitination of target proteins. Negatively regulates TRAF6-mediated NF-kappa-B activation independently of its E2 activity. Acts as a positive regulator of BMP7 signaling by mediating monoubiquitination of SMAD6, thereby regulating adipogenesis. Mediates monoubiquitination at different sites of the nuclear localization signal (NLS) of BAP1, leading to cytoplasmic retention of BAP1. Also able to monoubiquitinate the NLS of other chromatin-associated proteins, such as INO80 and CXXC1, affecting their subcellular location. Acts as a regulator of retrograde transport by assisting the TRIM27:MAGEL2 E3 ubiquitin ligase complex to mediate 'Lys-63'-linked ubiquitination of WASHC1, leading to promote endosomal F-actin assembly. This is (E3-independent) E2 ubiquitin-conjugating enzyme UBE2O (Ube2o) from Mus musculus (Mouse).